The sequence spans 725 residues: Eukaryotic translation initiation factor 3 subunit B (725 aa).

The RRM domain occupies 46 to 130 (NCVFIAGIPV…HTFTARSFKD (85 aa)). 6 WD repeats span residues 202–240 (RANWTETVFTWSPHGSYLSTIHKQGIILWGGKDYARAHR), 242–280 (AHTNVQYIDFSPCETYLVTYAAPEESNSWGDCEKDSLRI), 354–395 (VNIE…SMQR), 462–504 (PLSE…HAPK), 510–552 (DAGV…AKRT), and 554–594 (VIEH…FTFQ).

The protein belongs to the eIF-3 subunit B family. Component of the eukaryotic translation initiation factor 3 (eIF-3) complex.

The protein resides in the cytoplasm. Functionally, RNA-binding component of the eukaryotic translation initiation factor 3 (eIF-3) complex, which is involved in protein synthesis of a specialized repertoire of mRNAs and, together with other initiation factors, stimulates binding of mRNA and methionyl-tRNAi to the 40S ribosome. The eIF-3 complex specifically targets and initiates translation of a subset of mRNAs involved in cell proliferation. In Caenorhabditis elegans, this protein is Eukaryotic translation initiation factor 3 subunit B.